The following is a 290-amino-acid chain: Pyridoxal kinase PdxY (290 aa).

Substrate is bound by residues S9 and T44–Q45. ATP contacts are provided by D112, V144, E149, and K182. D221 provides a ligand contact to substrate.

It belongs to the pyridoxine kinase family. PdxY subfamily. Homodimer. Requires Mg(2+) as cofactor.

The catalysed reaction is pyridoxal + ATP = pyridoxal 5'-phosphate + ADP + H(+). The protein operates within cofactor metabolism; pyridoxal 5'-phosphate salvage; pyridoxal 5'-phosphate from pyridoxal: step 1/1. Pyridoxal kinase involved in the salvage pathway of pyridoxal 5'-phosphate (PLP). Catalyzes the phosphorylation of pyridoxal to PLP. In Vibrio vulnificus (strain CMCP6), this protein is Pyridoxal kinase PdxY.